The following is a 166-amino-acid chain: MANVRPSVVFKQQEVDHMADILKNSKSFIVFEYHGLTAANILALRNVLHSSNSKLFVLKNNITARAFEKAGVTGFEDRLTGPNAIAVAMDDEIAAIKAVNDVAKEFDFVKIKGAYLENKFADTHKIDQLAAIPGREGLYSMLLSCFTAPLRNVLYGLKAVAEQKGE.

Belongs to the universal ribosomal protein uL10 family. Part of the ribosomal stalk of the 50S ribosomal subunit. The N-terminus interacts with L11 and the large rRNA to form the base of the stalk. The C-terminus forms an elongated spine to which L12 dimers bind in a sequential fashion forming a multimeric L10(L12)X complex.

Functionally, forms part of the ribosomal stalk, playing a central role in the interaction of the ribosome with GTP-bound translation factors. In Ureaplasma urealyticum serovar 10 (strain ATCC 33699 / Western), this protein is Large ribosomal subunit protein uL10.